A 303-amino-acid chain; its full sequence is Hydroxyethylthiazole kinase (303 aa).

Over residues 1–15 (MTTASTTPNSDTSNL) the composition is skewed to polar residues. The tract at residues 1-23 (MTTASTTPNSDTSNLHEVAPDDP) is disordered. Methionine 67 serves as a coordination point for substrate. ATP-binding residues include arginine 142 and serine 206. Glycine 233 contacts substrate.

The protein belongs to the Thz kinase family. Requires Mg(2+) as cofactor.

It carries out the reaction 5-(2-hydroxyethyl)-4-methylthiazole + ATP = 4-methyl-5-(2-phosphooxyethyl)-thiazole + ADP + H(+). It participates in cofactor biosynthesis; thiamine diphosphate biosynthesis; 4-methyl-5-(2-phosphoethyl)-thiazole from 5-(2-hydroxyethyl)-4-methylthiazole: step 1/1. Catalyzes the phosphorylation of the hydroxyl group of 4-methyl-5-beta-hydroxyethylthiazole (THZ). The polypeptide is Hydroxyethylthiazole kinase (Bifidobacterium animalis subsp. lactis (strain AD011)).